Here is a 140-residue protein sequence, read N- to C-terminus: Ribosome-binding factor A (140 aa).

The span at 118-133 (DEAKQQKHNGKDKTDT) shows a compositional bias: basic and acidic residues. The interval 118–140 (DEAKQQKHNGKDKTDTADSEGEE) is disordered.

The protein belongs to the RbfA family. In terms of assembly, monomer. Binds 30S ribosomal subunits, but not 50S ribosomal subunits or 70S ribosomes.

The protein resides in the cytoplasm. In terms of biological role, one of several proteins that assist in the late maturation steps of the functional core of the 30S ribosomal subunit. Associates with free 30S ribosomal subunits (but not with 30S subunits that are part of 70S ribosomes or polysomes). Required for efficient processing of 16S rRNA. May interact with the 5'-terminal helix region of 16S rRNA. This chain is Ribosome-binding factor A, found in Shewanella woodyi (strain ATCC 51908 / MS32).